The sequence spans 6199 residues: Adhesion G-protein coupled receptor V1 (6199 aa).

Residues 1 to 23 form the signal peptide; it reads MPAVLALSGLLLMLLTVSVRSES. Calx-beta domains lie at 24–109, 126–230, 249–355, 380–480, 637–737, 753–853, 869–972, 997–1083, 1099–1199, 1434–1534, 1563–1655, 1835–1937, 1963–2063, 2092–2190, 2208–2308, 2425–2525, 2582–2659, 2673–2773, 2814–2908, 2931–3029, and 3054–3154; these read AELR…VFIL, ATIT…VQLT, ISRN…QVVL, DKPY…LKLI, PDIA…ILTL, SREI…VVLS, NITV…ITLL, IYFA…YIVL, TVVI…LRLM, PIPG…FYLQ, GLFS…RVRL, IIVT…VRLT, LFVF…FLEL, QVII…RIEL, ITIL…KVEL, AAFC…FIIK, VREE…QIGL, DTVT…RVIL, PSSL…LVNI, EIII…QLIL, and GHGI…TVTL. Topologically, residues 24–5803 are extracellular; that stretch reads AELRFQGQTQ…IESLASFNEA (5780 aa). EAR repeat units lie at residues 3239-3284, 3285-3333, 3336-3372, 3374-3420, 3422-3467, and 3471-3513; these read VLAV…KWQG, VFVP…RVQA, NLTLEQTFSVSGFSVKHFSTDLKQYLIASSEIFVWNR, SFFL…QWTD, RFQN…LWGS, and VFQQ…SWRS. 13 Calx-beta domains span residues 3562–3605, 3619–3719, 3778–3854, 3916–3985, 4000–4103, 4120–4220, 4247–4335, 4371–4471, 4493–4593, 4615–4715, 4993–5076, 5125–5225, and 5260–5360; these read SNQS…RVSL, QVTF…TIVL, ITLS…FVNI, VLRL…MVKL, VVVS…IQLL, VVIR…QLRL, HGLF…FLNI, VIIQ…LQLT, DSPN…IIML, KFGD…TLRL, QHLV…VNLT, SEDS…IYLS, and VGFS…LVEV. A GAIN-B domain is found at 5636–5801; the sequence is PYFTIAAHHW…AEIESLASFN (166 aa). Disulfide bonds link cysteine 5751–cysteine 5780 and cysteine 5768–cysteine 5782. The GPS stretch occupies residues 5751–5801; sequence CLLWNQAAESWLSDGQFCRLVDDTQNYVECACSHLSIYTAYAEIESLASFN. A helical membrane pass occupies residues 5804 to 5824; the sequence is FYAAGFICISGFALAMVSHLM. The Cytoplasmic portion of the chain corresponds to 5825 to 5834; sequence CARFLMFAAK. Residues 5835 to 5855 form a helical membrane-spanning segment; that stretch reads LLTHMMVACLGTQICFLVSAF. The Extracellular segment spans residues 5856-5864; that stretch reads RGRMFSEDS. A helical transmembrane segment spans residues 5865-5885; the sequence is CAALGLFFHYFHLSQFGWMLV. Residues 5886–5908 are Cytoplasmic-facing; it reads QAINFWQILVMNDEHTERRYLLY. A helical transmembrane segment spans residues 5909-5929; the sequence is FLLSWGLPALVIIVLVVVLLG. Topologically, residues 5930-5954 are extracellular; that stretch reads GFGWSIHSVYGLVQGDLCFIPNVYA. The chain crosses the membrane as a helical span at residues 5955-5975; it reads ALCTAALVPLICLVGVLVIFI. Residues 5976–6001 are Cytoplasmic-facing; the sequence is HAYQVTQQWKAYDDIYRGRTNSSEVP. A helical transmembrane segment spans residues 6002 to 6022; that stretch reads MMLYLFALVTLVCVWAGLHMA. Topologically, residues 6023–6025 are extracellular; that stretch reads YRY. The helical transmembrane segment at 6026 to 6046 threads the bilayer; that stretch reads IWMLILLVIFNIFLGLYVFSV. Residues 6047-6199 lie on the Cytoplasmic side of the membrane; the sequence is YFVMHNQLFW…RRIPIADTHL (153 aa).

The protein belongs to the G-protein coupled receptor 2 family. Adhesion G-protein coupled receptor (ADGR) subfamily. In terms of assembly, heterodimer of 2 chains generated by proteolytic processing; the large extracellular N-terminal fragment and the membrane-bound C-terminal fragment predominantly remain associated and non-covalently linked. In terms of processing, autoproteolytically processed at the GPS region of the GAIN-B domain; this cleavage modulates receptor activity.

Its subcellular location is the cell membrane. The protein localises to the cell projection. The protein resides in the stereocilium membrane. It localises to the photoreceptor inner segment. Receptor that may have an important role in the development of the sensory nervous system. In Danio rerio (Zebrafish), this protein is Adhesion G-protein coupled receptor V1 (adgrv1).